The primary structure comprises 608 residues: Threonine--tRNA ligase (608 aa).

Residues 1–144 form an editing domain region; that stretch reads MRILLIHSDY…SRTITAEEEE (144 aa). The tract at residues 195–489 is catalytic; that stretch reads PHVKLMREKE…ELDEKAPMLP (295 aa). Residues Cys286, His338, and His459 each contribute to the Zn(2+) site.

This sequence belongs to the class-II aminoacyl-tRNA synthetase family. As to quaternary structure, homodimer. Zn(2+) is required as a cofactor.

It localises to the cytoplasm. The enzyme catalyses tRNA(Thr) + L-threonine + ATP = L-threonyl-tRNA(Thr) + AMP + diphosphate + H(+). Functionally, catalyzes the attachment of threonine to tRNA(Thr) in a two-step reaction: L-threonine is first activated by ATP to form Thr-AMP and then transferred to the acceptor end of tRNA(Thr). Also edits incorrectly charged L-seryl-tRNA(Thr). In Methanobrevibacter smithii (strain ATCC 35061 / DSM 861 / OCM 144 / PS), this protein is Threonine--tRNA ligase.